A 548-amino-acid polypeptide reads, in one-letter code: MDSQRNLLVIALLFVSFMIWQAWEQDKNPQPQTQQTTQTTTTAAGSAADQGVPASGQGKLITVKTDVLDLTINTRGGDVEQALLPTYPKELGSKEPFQLLETTPQFIYQAQSGLTGRDGPDNPANGPRPLYSVDNDTFVLADGQNELHVPMTWTDAAGNTFTKTFVLKRGEYAVNVNYSVQNAGEKPLEISTFGQLKQSINLPSHRDTGSSNFALHTFRGAAYSTPDEKYEKYKFDTIADNENLNVSSNGGWVAMLQQYFATAWIPRNDGTNNFYTANLGNGIAAIGYKSQPVLVQPGQTGAMTSTLWVGPEIQDKMAAVAPHLDLTVDYGWLWFISQPLFKLLKWIHSFLGNWGFSIIVITFIVRGIMYPLTKAQYTSMAKMRMLQPKIQAMRERLGDDKQRQSQEMMALYKAEKVNPLGGCFPLIIQMPIFLALYYMLMGSIELRHAPFALWIHDLSAQDPYYILPILMGVTMFFIQKMSPTTVTDPMQQKIMTFMPVIFTVFFLWFPSGLVLYYIVSNLVTIIQQQLIYRGLEKRGLHSREKKSS.

The chain crosses the membrane as a helical span at residues 6–26 (NLLVIALLFVSFMIWQAWEQD). Residues 28-54 (NPQPQTQQTTQTTTTAAGSAADQGVPA) form a disordered region. Positions 29-42 (PQPQTQQTTQTTTT) are enriched in low complexity. The next 4 helical transmembrane spans lie at 350 to 370 (FLGN…GIMY), 424 to 444 (FPLI…MGSI), 458 to 478 (LSAQ…MFFI), and 499 to 519 (PVIF…YYIV).

Belongs to the OXA1/ALB3/YidC family. Type 1 subfamily. As to quaternary structure, interacts with the Sec translocase complex via SecD. Specifically interacts with transmembrane segments of nascent integral membrane proteins during membrane integration.

Its subcellular location is the cell inner membrane. Functionally, required for the insertion and/or proper folding and/or complex formation of integral membrane proteins into the membrane. Involved in integration of membrane proteins that insert both dependently and independently of the Sec translocase complex, as well as at least some lipoproteins. Aids folding of multispanning membrane proteins. This is Membrane protein insertase YidC from Citrobacter koseri (strain ATCC BAA-895 / CDC 4225-83 / SGSC4696).